Consider the following 305-residue polypeptide: MTKKLALQDIILTLQQFWAKQGCMLMQSYDTEKGAGTMSPYTFLRAIGPEPWNVAYVEPSRRPADGRYGDNPNRLYQHHQFQVLMKPSPSNIQELYLDSLRALGIEPKEHDIRFVEDNWENPSMGCAGVGWEVWLDGMEITQFTYFQQVGGLEVKPVAAEVTYGLERLSSYIQDVDSVYDLEWADGVKYGDIFKEPEYEHSKYSFEESNQEMLLNLFDTFETEAKKQLANGLVHPAYDYILKCSHTFNLLDARGAVSVTERAGYLSRIRNMAKSVAKVFVAERKKLGYPLIKDEKLRQELLKEEK.

Belongs to the class-II aminoacyl-tRNA synthetase family. As to quaternary structure, tetramer of two alpha and two beta subunits.

Its subcellular location is the cytoplasm. The catalysed reaction is tRNA(Gly) + glycine + ATP = glycyl-tRNA(Gly) + AMP + diphosphate. This chain is Glycine--tRNA ligase alpha subunit, found in Ligilactobacillus salivarius (strain UCC118) (Lactobacillus salivarius).